Reading from the N-terminus, the 273-residue chain is tRNA (guanine-N(7)-)-methyltransferase (273 aa).

Residues 1–31 show a composition bias toward polar residues; the sequence is MSQHPDINTNVDATSLTDDQKSLDTNATSGN. Residues 1-36 are disordered; the sequence is MSQHPDINTNVDATSLTDDQKSLDTNATSGNEVAPD. S-adenosyl-L-methionine contacts are provided by Glu-105, Glu-130, Asp-157, and Asp-179. Asp-179 is an active-site residue. Substrate-binding positions include Lys-183, Asp-215, and 252 to 255; that span reads TKFE.

It belongs to the class I-like SAM-binding methyltransferase superfamily. TrmB family.

It carries out the reaction guanosine(46) in tRNA + S-adenosyl-L-methionine = N(7)-methylguanosine(46) in tRNA + S-adenosyl-L-homocysteine. Its pathway is tRNA modification; N(7)-methylguanine-tRNA biosynthesis. Catalyzes the formation of N(7)-methylguanine at position 46 (m7G46) in tRNA. The protein is tRNA (guanine-N(7)-)-methyltransferase of Psychrobacter cryohalolentis (strain ATCC BAA-1226 / DSM 17306 / VKM B-2378 / K5).